The sequence spans 476 residues: tRNA(Ile)-lysidine synthase (476 aa).

Residue 30–35 coordinates ATP; that stretch reads SGGPDS.

This sequence belongs to the tRNA(Ile)-lysidine synthase family.

The protein localises to the cytoplasm. The catalysed reaction is cytidine(34) in tRNA(Ile2) + L-lysine + ATP = lysidine(34) in tRNA(Ile2) + AMP + diphosphate + H(+). Ligates lysine onto the cytidine present at position 34 of the AUA codon-specific tRNA(Ile) that contains the anticodon CAU, in an ATP-dependent manner. Cytidine is converted to lysidine, thus changing the amino acid specificity of the tRNA from methionine to isoleucine. The polypeptide is tRNA(Ile)-lysidine synthase (Bacillus cereus (strain ATCC 14579 / DSM 31 / CCUG 7414 / JCM 2152 / NBRC 15305 / NCIMB 9373 / NCTC 2599 / NRRL B-3711)).